We begin with the raw amino-acid sequence, 376 residues long: C2H2 type master regulator of conidiophore development brlA (376 aa).

The span at 20–29 (TSFSSASSSA) shows a compositional bias: low complexity. Disordered stretches follow at residues 20 to 47 (TSFS…ELSL), 197 to 229 (HHHH…ASPN), and 241 to 267 (EAQR…PESG). A compositionally biased stretch (polar residues) spans 34 to 44 (TPSSRRSTPNE). Positions 197–209 (HHHHHNHHQHHHA) are enriched in basic residues. The span at 219–229 (QLHSNTGASPN) shows a compositional bias: polar residues. Basic and acidic residues predominate over residues 241-256 (EAQRKTSELQRAQIRE). The segment at 277–301 (CKCDYPGCNKAFRRNEHLKRHKQTF) adopts a C2H2-type 1; degenerate zinc-finger fold. Residues 309–332 (FSCEFCGKDQFNRQDNLNNHRKLH) form a C2H2-type 2 zinc finger. The interval 351–376 (IIEHEERSRKRRAPPKSKAEKRDYDF) is disordered. Residues 367 to 376 (SKAEKRDYDF) are compositionally biased toward basic and acidic residues.

It localises to the nucleus. In terms of biological role, brlA, abaA and wetA are pivotal regulators of conidiophore development and conidium maturation. They act individually and together to regulate their own expression and that of numerous other sporulation-specific genes. Binds promoters of target genes at brlA response elements (BREs) containing the conserved sequence 5'-(C/A)(A/G)AGGG(G/A)-3'. The protein is C2H2 type master regulator of conidiophore development brlA of Hapsidospora chrysogena (Acremonium chrysogenum).